The chain runs to 372 residues: Aminomethyltransferase (372 aa).

This sequence belongs to the GcvT family. The glycine cleavage system is composed of four proteins: P, T, L and H.

It carries out the reaction N(6)-[(R)-S(8)-aminomethyldihydrolipoyl]-L-lysyl-[protein] + (6S)-5,6,7,8-tetrahydrofolate = N(6)-[(R)-dihydrolipoyl]-L-lysyl-[protein] + (6R)-5,10-methylene-5,6,7,8-tetrahydrofolate + NH4(+). Functionally, the glycine cleavage system catalyzes the degradation of glycine. This chain is Aminomethyltransferase, found in Paraburkholderia phymatum (strain DSM 17167 / CIP 108236 / LMG 21445 / STM815) (Burkholderia phymatum).